The chain runs to 192 residues: Shikimate kinase (192 aa).

An ATP-binding site is contributed by 26-31; sequence ASGKSS. Residue Ser30 coordinates Mg(2+). Asp48, Arg72, and Gly94 together coordinate substrate. Arg132 provides a ligand contact to ATP. Arg151 contributes to the substrate binding site.

The protein belongs to the shikimate kinase family. As to quaternary structure, monomer. It depends on Mg(2+) as a cofactor.

The protein resides in the cytoplasm. The enzyme catalyses shikimate + ATP = 3-phosphoshikimate + ADP + H(+). Its pathway is metabolic intermediate biosynthesis; chorismate biosynthesis; chorismate from D-erythrose 4-phosphate and phosphoenolpyruvate: step 5/7. Functionally, catalyzes the specific phosphorylation of the 3-hydroxyl group of shikimic acid using ATP as a cosubstrate. The polypeptide is Shikimate kinase (Prochlorococcus marinus (strain MIT 9313)).